The primary structure comprises 401 residues: MKEKIVLAYSGGLDTSVAVQWLIDKGYDVVACCLDVGEGKDLDIVYKKALDMRAVECHIIDATKEFSDEYVSYAIKGNLMYENAYPLVSALSRPLIAKKLVEIAEKTNSVGIAHGCTGKGNDQVRFEVAIKALNPSLKAFAPVREWAWSREEEIDYAIKHNIPVSINHDSPYSIDQNLWGRANECGILEDPYAAPPEDAFDLTNALEETPDTADEIILTFDKGIPVQIDGKTYELDDLILTLNALAGKHGIGRIDHVENRLVGIKSREIYEAPAAEVILKAHKALETITLTKDVAHFKPIIEKQFAEQLYNGLWFSPLTDSLKLFIDSTQQYVSGDVRIKLFKGNAIVNGRKSPYTLYDEKLATYTKEDAFNQDAAVGFIDIYGLPTQVNAMLHGGYSNEQ.

Residue 8–16 participates in ATP binding; it reads AYSGGLDTS. Tyrosine 85 is an L-citrulline binding site. Glycine 115 provides a ligand contact to ATP. 3 residues coordinate L-aspartate: threonine 117, asparagine 121, and aspartate 122. Asparagine 121 serves as a coordination point for L-citrulline. Positions 125, 173, 258, and 270 each coordinate L-citrulline.

This sequence belongs to the argininosuccinate synthase family. Type 1 subfamily. Homotetramer.

The protein localises to the cytoplasm. It catalyses the reaction L-citrulline + L-aspartate + ATP = 2-(N(omega)-L-arginino)succinate + AMP + diphosphate + H(+). It functions in the pathway amino-acid biosynthesis; L-arginine biosynthesis; L-arginine from L-ornithine and carbamoyl phosphate: step 2/3. In Staphylococcus aureus (strain MRSA252), this protein is Argininosuccinate synthase.